Reading from the N-terminus, the 644-residue chain is Serine/threonine kinase YeaG (644 aa).

This sequence belongs to the PrkA family. In terms of assembly, monomer.

It localises to the cytoplasm. The enzyme catalyses L-seryl-[protein] + ATP = O-phospho-L-seryl-[protein] + ADP + H(+). It carries out the reaction L-threonyl-[protein] + ATP = O-phospho-L-threonyl-[protein] + ADP + H(+). Kinase that plays a role in the adaptation to sustained nitrogen starvation. This chain is Serine/threonine kinase YeaG (yeaG), found in Escherichia coli O157:H7.